We begin with the raw amino-acid sequence, 304 residues long: Sulfate adenylyltransferase subunit 2 (304 aa).

This sequence belongs to the PAPS reductase family. CysD subfamily. In terms of assembly, heterodimer composed of CysD, the smaller subunit, and CysN.

The catalysed reaction is sulfate + ATP + H(+) = adenosine 5'-phosphosulfate + diphosphate. It functions in the pathway sulfur metabolism; hydrogen sulfide biosynthesis; sulfite from sulfate: step 1/3. With CysN forms the ATP sulfurylase (ATPS) that catalyzes the adenylation of sulfate producing adenosine 5'-phosphosulfate (APS) and diphosphate, the first enzymatic step in sulfur assimilation pathway. APS synthesis involves the formation of a high-energy phosphoric-sulfuric acid anhydride bond driven by GTP hydrolysis by CysN coupled to ATP hydrolysis by CysD. The sequence is that of Sulfate adenylyltransferase subunit 2 from Acinetobacter baylyi (strain ATCC 33305 / BD413 / ADP1).